Here is a 430-residue protein sequence, read N- to C-terminus: MAQILAPSTQWQMRITKTSPCATPITSKMWSSLVMKQTKKVAHSAKFRVMAVNSENGTINRVEDLLNLDITPFTDSIIAEYIWIGGTGIDVRSKSRTISKPVSHPSEVPKWNYDGSSTGQAPGEDSEVILYPQAIFKDPFRGGNNILVVCDAYTPAGEPIPTNKRHRAAEIFSNPKVEAEIPWYGIEQEYTLLQTNVKWPLGWPVGGYPGPQGPYYCAAGADKSFGRDISDAHYKACIYAGINISGTNGEVMPGQWEYQVGPSVGIEAGDHIWASRYILERITEQAGVVLTLDPKPIEGDWNGAGCHTNYSTKSMREDGGFEVIKKAILNLSLRHKIHIEAYGEGNERRLTGKHETASINDFSWGVANRGCSIRVGRDTEKNGKGYLEDRRPASNMDPYVVTALLAESTLLWEPTLEAEALAAQKIALKV.

A chloroplast-targeting transit peptide spans 1 to 49; it reads MAQILAPSTQWQMRITKTSPCATPITSKMWSSLVMKQTKKVAHSAKFRV. A GS beta-grasp domain is found at 77–157; sequence IIAEYIWIGG…VVCDAYTPAG (81 aa). The segment at 99–119 is disordered; sequence SKPVSHPSEVPKWNYDGSSTG. The region spanning 161–430 is the GS catalytic domain; sequence PTNKRHRAAE…LAAQKIALKV (270 aa).

It belongs to the glutamine synthetase family. In terms of assembly, homooctamer.

The protein resides in the plastid. Its subcellular location is the chloroplast. The catalysed reaction is L-glutamate + NH4(+) + ATP = L-glutamine + ADP + phosphate + H(+). The light-modulated chloroplast enzyme, encoded by a nuclear gene and expressed primarily in leaves, is responsible for the reassimilation of the ammonia generated by photorespiration. The polypeptide is Glutamine synthetase leaf isozyme, chloroplastic (GS2) (Pisum sativum (Garden pea)).